Reading from the N-terminus, the 123-residue chain is Large ribosomal subunit protein bL19 (123 aa).

The protein belongs to the bacterial ribosomal protein bL19 family.

Its function is as follows. This protein is located at the 30S-50S ribosomal subunit interface and may play a role in the structure and function of the aminoacyl-tRNA binding site. In Laribacter hongkongensis (strain HLHK9), this protein is Large ribosomal subunit protein bL19.